A 157-amino-acid polypeptide reads, in one-letter code: 2-C-methyl-D-erythritol 2,4-cyclodiphosphate synthase (157 aa).

Residues Asp-9 and His-11 each contribute to the a divalent metal cation site. Residues 9 to 11 and 35 to 36 each bind 4-CDP-2-C-methyl-D-erythritol 2-phosphate; these read DVH and HS. An a divalent metal cation-binding site is contributed by His-43. Residues 57-59, 62-66, 101-107, 133-136, Phe-140, and Arg-143 contribute to the 4-CDP-2-C-methyl-D-erythritol 2-phosphate site; these read DIG, FPDTD, AQKPKMA, and TTTE.

It belongs to the IspF family. As to quaternary structure, homotrimer. The cofactor is a divalent metal cation.

It carries out the reaction 4-CDP-2-C-methyl-D-erythritol 2-phosphate = 2-C-methyl-D-erythritol 2,4-cyclic diphosphate + CMP. The protein operates within isoprenoid biosynthesis; isopentenyl diphosphate biosynthesis via DXP pathway; isopentenyl diphosphate from 1-deoxy-D-xylulose 5-phosphate: step 4/6. Functionally, involved in the biosynthesis of isopentenyl diphosphate (IPP) and dimethylallyl diphosphate (DMAPP), two major building blocks of isoprenoid compounds. Catalyzes the conversion of 4-diphosphocytidyl-2-C-methyl-D-erythritol 2-phosphate (CDP-ME2P) to 2-C-methyl-D-erythritol 2,4-cyclodiphosphate (ME-CPP) with a corresponding release of cytidine 5-monophosphate (CMP). The polypeptide is 2-C-methyl-D-erythritol 2,4-cyclodiphosphate synthase (Halalkalibacterium halodurans (strain ATCC BAA-125 / DSM 18197 / FERM 7344 / JCM 9153 / C-125) (Bacillus halodurans)).